We begin with the raw amino-acid sequence, 485 residues long: Glutamyl-tRNA(Gln) amidotransferase subunit A (485 aa).

Residues lysine 78 and serine 153 each act as charge relay system in the active site. The active-site Acyl-ester intermediate is serine 177.

This sequence belongs to the amidase family. GatA subfamily. In terms of assembly, heterotrimer of A, B and C subunits.

The enzyme catalyses L-glutamyl-tRNA(Gln) + L-glutamine + ATP + H2O = L-glutaminyl-tRNA(Gln) + L-glutamate + ADP + phosphate + H(+). Its function is as follows. Allows the formation of correctly charged Gln-tRNA(Gln) through the transamidation of misacylated Glu-tRNA(Gln) in organisms which lack glutaminyl-tRNA synthetase. The reaction takes place in the presence of glutamine and ATP through an activated gamma-phospho-Glu-tRNA(Gln). This is Glutamyl-tRNA(Gln) amidotransferase subunit A from Syntrophus aciditrophicus (strain SB).